We begin with the raw amino-acid sequence, 276 residues long: Phosphonoacetaldehyde hydrolase (276 aa).

Residue Asp19 is the Nucleophile of the active site. Residues Asp19 and Ala21 each contribute to the Mg(2+) site. Catalysis depends on Lys60, which acts as the Schiff-base intermediate with substrate. A Mg(2+)-binding site is contributed by Asp193.

It belongs to the HAD-like hydrolase superfamily. PhnX family. As to quaternary structure, homodimer. It depends on Mg(2+) as a cofactor.

It carries out the reaction phosphonoacetaldehyde + H2O = acetaldehyde + phosphate + H(+). Involved in phosphonate degradation. The chain is Phosphonoacetaldehyde hydrolase from Bordetella bronchiseptica (strain ATCC BAA-588 / NCTC 13252 / RB50) (Alcaligenes bronchisepticus).